Here is a 426-residue protein sequence, read N- to C-terminus: Protein FAM124B (426 aa).

Belongs to the FAM124 family.

It localises to the nucleus. The sequence is that of Protein FAM124B (fam124b) from Xenopus tropicalis (Western clawed frog).